The primary structure comprises 238 residues: Sarcospan (238 aa).

The disordered stretch occupies residues 1–33 (MGKDRQPRGQQRQGDAAGPDDPGPKKGAGTREQ). Residues 1 to 48 (MGKDRQPRGQQRQGDAAGPDDPGPKKGAGTREQRGEEEAQTCCGCRFP) lie on the Extracellular side of the membrane. Over residues 8–20 (RGQQRQGDAAGPD) the composition is skewed to low complexity. A helical membrane pass occupies residues 49–69 (LLLALLQLALGVAVTVVGFLM). At 70 to 81 (ASVSSSLLVRAT) the chain is on the cytoplasmic side. Residues 82 to 102 (PYWAGIIVCVVAYLGLFMLCV) traverse the membrane as a helical segment. The Cytoplasmic segment spans residues 103-117 (SYQVDERTCIQFSMK). A helical membrane pass occupies residues 118–138 (LLYFVLSALGLVVCVLAVAFA). The Extracellular portion of the chain corresponds to 139–188 (AHHYSLLTHLTCENAPDSCQCKLPSSEPLSRTFVYRDVTDCTSITGTFQV). The helical transmembrane segment at 189–209 (FLLVQMVLNLVCGLVCLVACF) threads the bilayer. The Cytoplasmic portion of the chain corresponds to 210 to 238 (VMWKHRYQVFYVGVRMCPLSASEGQQQKV).

Its subcellular location is the cell membrane. It localises to the sarcolemma. The protein resides in the postsynaptic cell membrane. Component of the dystrophin-glycoprotein complex (DGC), a complex that spans the muscle plasma membrane and forms a link between the F-actin cytoskeleton and the extracellular matrix. Preferentially associates with the sarcoglycan subcomplex of the DGC. The polypeptide is Sarcospan (SSPN) (Oryctolagus cuniculus (Rabbit)).